The sequence spans 295 residues: Thioredoxin-related transmembrane protein 2 (295 aa).

An N-terminal signal peptide occupies residues 1–48 (MAVLAPLIALVYSVPRLSRWLARPYCLLSALLSIAFLLVRKLPPICNG). Over 49-102 (LPTQREDGNPCDFDWREVEILMFLSAIVMMKNRRSITVEQHVGNIFMFSKVANA) the chain is Extracellular. A helical membrane pass occupies residues 103–125 (ILFFRLDIRMGLLYLTLCIVFLM). Residues 114–269 (LLYLTLCIVF…LYQRAKKHSK (156 aa)) enclose the Thioredoxin domain. Over 126 to 295 (TCKPPLYMGP…VPDGENKKDK (170 aa)) the chain is Cytoplasmic. Phosphoserine occurs at positions 211 and 243. Residues 266–295 (KHSKGGDMSEEKPVDPAPTTVPDGENKKDK) form a disordered region. The span at 269 to 279 (KGGDMSEEKPV) shows a compositional bias: basic and acidic residues. The Di-lysine motif motif lies at 292-295 (KKDK).

As to quaternary structure, monomer. Homodimer; disulfide-linked. Occurs in both reduced and oxidized monomeric form. Oxidative conditions increase homodimerization. Interacts with CANX. Interacts with ATP2A2.

The protein resides in the endoplasmic reticulum membrane. It localises to the mitochondrion membrane. Functionally, endoplasmic reticulum and mitochondria-associated protein that probably functions as a regulator of cellular redox state and thereby regulates protein post-translational modification, protein folding and mitochondrial activity. Indirectly regulates neuronal proliferation, migration, and organization in the developing brain. This is Thioredoxin-related transmembrane protein 2 (Tmx2) from Mus musculus (Mouse).